Here is a 711-residue protein sequence, read N- to C-terminus: Cyclomaltodextrin glucanotransferase (711 aa).

The first 31 residues, 1–31 (MRRWLSLVLSMSFVFSAIFIVSDTQKVTVEA), serve as a signal peptide directing secretion. The A1 stretch occupies residues 32–165 (AGNLNKVNFT…GIKVIIDFAP (134 aa)). Ca(2+)-binding residues include D55, N57, N60, and N61. A disulfide bond links C71 and C78. Positions 79 and 81 each coordinate Ca(2+). Residue 127–128 (YW) participates in substrate binding. Position 166 (N166) interacts with Ca(2+). The tract at residues 166–229 (NHTSPASETN…NLFDLADLNH (64 aa)) is b. H167 contributes to the substrate binding site. Ca(2+) is bound at residue I217. 220-223 (NLFD) lines the substrate pocket. D226 serves as a coordination point for Ca(2+). The interval 230 to 433 (QNPVIDRYLK…LRRNNPALAY (204 aa)) is A2. Residue R254 participates in substrate binding. The Nucleophile role is filled by D256. 259 to 260 (KH) contacts substrate. H260 lines the Ca(2+) pocket. E284 (proton donor) is an active-site residue. H354, D398, and R402 together coordinate substrate. Positions 434–522 (GDTEQRWING…EVGVWAYSAT (89 aa)) are c. The tract at residues 523-606 (ESTPIIGHVG…SAAYDNFEVL (84 aa)) is d. The 79-residue stretch at 526–604 (PIIGHVGPMM…QTSAAYDNFE (79 aa)) folds into the IPT/TIG domain. Positions 605 to 711 (VLTNDQVSVR…TGKIIVDWQN (107 aa)) constitute a CBM20 domain. The tract at residues 607 to 711 (TNDQVSVRFV…TGKIIVDWQN (105 aa)) is e.

Belongs to the glycosyl hydrolase 13 family. In terms of assembly, monomer. It depends on Ca(2+) as a cofactor.

The protein resides in the secreted. It carries out the reaction Cyclizes part of a (1-&gt;4)-alpha-D-glucan chain by formation of a (1-&gt;4)-alpha-D-glucosidic bond.. This Geobacillus stearothermophilus (Bacillus stearothermophilus) protein is Cyclomaltodextrin glucanotransferase (cgt).